The chain runs to 334 residues: Transcription factor MYB92 (334 aa).

HTH myb-type domains are found at residues 9–61 and 62–116; these read DSGL…TNYL and RPDI…KKKL. 2 DNA-binding regions (H-T-H motif) span residues 37-61 and 89-112; these read WRAL…TNYL and WSTI…NTHL.

In terms of assembly, interacts with FBX5. In terms of tissue distribution, highly expressed in roots and at lower levels in stems, flowers and siliques.

Its subcellular location is the nucleus. In terms of biological role, probable transcription factor. This is Transcription factor MYB92 from Arabidopsis thaliana (Mouse-ear cress).